The primary structure comprises 431 residues: Enolase (431 aa).

Gln-167 contributes to the (2R)-2-phosphoglycerate binding site. Glu-209 serves as the catalytic Proton donor. 3 residues coordinate Mg(2+): Asp-246, Glu-290, and Asp-317. 4 residues coordinate (2R)-2-phosphoglycerate: Lys-342, Arg-371, Ser-372, and Lys-393. Residue Lys-342 is the Proton acceptor of the active site.

The protein belongs to the enolase family. Component of the RNA degradosome, a multiprotein complex involved in RNA processing and mRNA degradation. The cofactor is Mg(2+).

It is found in the cytoplasm. The protein localises to the secreted. It localises to the cell surface. It carries out the reaction (2R)-2-phosphoglycerate = phosphoenolpyruvate + H2O. Its pathway is carbohydrate degradation; glycolysis; pyruvate from D-glyceraldehyde 3-phosphate: step 4/5. Functionally, catalyzes the reversible conversion of 2-phosphoglycerate (2-PG) into phosphoenolpyruvate (PEP). It is essential for the degradation of carbohydrates via glycolysis. The polypeptide is Enolase (Yersinia enterocolitica serotype O:8 / biotype 1B (strain NCTC 13174 / 8081)).